The primary structure comprises 211 residues: Probable nicotinate-nucleotide adenylyltransferase (211 aa).

This sequence belongs to the NadD family.

The enzyme catalyses nicotinate beta-D-ribonucleotide + ATP + H(+) = deamido-NAD(+) + diphosphate. It functions in the pathway cofactor biosynthesis; NAD(+) biosynthesis; deamido-NAD(+) from nicotinate D-ribonucleotide: step 1/1. Its function is as follows. Catalyzes the reversible adenylation of nicotinate mononucleotide (NaMN) to nicotinic acid adenine dinucleotide (NaAD). This chain is Probable nicotinate-nucleotide adenylyltransferase, found in Legionella pneumophila (strain Lens).